The following is a 172-amino-acid chain: Peptide methionine sulfoxide reductase MsrA 2 (172 aa).

C12 is an active-site residue.

It belongs to the MsrA Met sulfoxide reductase family.

It carries out the reaction L-methionyl-[protein] + [thioredoxin]-disulfide + H2O = L-methionyl-(S)-S-oxide-[protein] + [thioredoxin]-dithiol. The catalysed reaction is [thioredoxin]-disulfide + L-methionine + H2O = L-methionine (S)-S-oxide + [thioredoxin]-dithiol. Its function is as follows. Has an important function as a repair enzyme for proteins that have been inactivated by oxidation. Catalyzes the reversible oxidation-reduction of methionine sulfoxide in proteins to methionine. In Lactococcus lactis subsp. lactis (strain IL1403) (Streptococcus lactis), this protein is Peptide methionine sulfoxide reductase MsrA 2 (msrA2).